Here is a 385-residue protein sequence, read N- to C-terminus: ATP phosphoribosyltransferase regulatory subunit (385 aa).

The protein belongs to the class-II aminoacyl-tRNA synthetase family. HisZ subfamily. Heteromultimer composed of HisG and HisZ subunits.

The protein resides in the cytoplasm. It functions in the pathway amino-acid biosynthesis; L-histidine biosynthesis; L-histidine from 5-phospho-alpha-D-ribose 1-diphosphate: step 1/9. Its function is as follows. Required for the first step of histidine biosynthesis. May allow the feedback regulation of ATP phosphoribosyltransferase activity by histidine. In Bordetella avium (strain 197N), this protein is ATP phosphoribosyltransferase regulatory subunit.